The following is a 221-amino-acid chain: GTP cyclohydrolase 1 (221 aa).

Cys-109, His-112, and Cys-180 together coordinate Zn(2+).

Belongs to the GTP cyclohydrolase I family. Toroid-shaped homodecamer, composed of two pentamers of five dimers.

It carries out the reaction GTP + H2O = 7,8-dihydroneopterin 3'-triphosphate + formate + H(+). The protein operates within cofactor biosynthesis; 7,8-dihydroneopterin triphosphate biosynthesis; 7,8-dihydroneopterin triphosphate from GTP: step 1/1. The protein is GTP cyclohydrolase 1 of Serratia proteamaculans (strain 568).